A 530-amino-acid polypeptide reads, in one-letter code: Hyalin (530 aa).

HYR domains lie at 1–66 (NVEI…TVTA), 67–150 (TDSI…NVVE), 151–234 (VDTT…NVVE), 235–319 (VDTT…NVVE), 320–403 (VDTT…NIVE), 404–486 (EDTT…TVNT), and 487–530 (VDTT…ASLV).

As to quaternary structure, homooligomer in presence of calcium. Glycosylated.

The protein localises to the secreted. It localises to the extracellular space. It is found in the extracellular matrix. Its function is as follows. Major constituent of the hyaline layer. The hyaline layer of echinoderm embryos is an extraembryonic matrix that functions as a substrate for cell adhesion through early development. This is Hyalin from Lytechinus variegatus (Green sea urchin).